A 458-amino-acid chain; its full sequence is PH domain-containing protein DDB_G0274775 (458 aa).

A PH domain is found at 15–112; that stretch reads PSDREGWLTK…WMESIKRNLD (98 aa). Residues 111–154 are disordered; sequence LDGEGGMKSGGNDIVSSPKINSEPTPKVNQNGSAPEKSSLSSPR. A compositionally biased stretch (polar residues) spans 124 to 142; sequence IVSSPKINSEPTPKVNQNG. Low complexity predominate over residues 143-154; it reads SAPEKSSLSSPR.

This is PH domain-containing protein DDB_G0274775 from Dictyostelium discoideum (Social amoeba).